The chain runs to 212 residues: 3-demethoxyubiquinol 3-hydroxylase (212 aa).

E61, E91, H94, E143, E175, and H178 together coordinate Fe cation.

Belongs to the COQ7 family. Requires Fe cation as cofactor.

It localises to the cell membrane. The enzyme catalyses a 5-methoxy-2-methyl-3-(all-trans-polyprenyl)benzene-1,4-diol + AH2 + O2 = a 3-demethylubiquinol + A + H2O. The protein operates within cofactor biosynthesis; ubiquinone biosynthesis. In terms of biological role, catalyzes the hydroxylation of 2-nonaprenyl-3-methyl-6-methoxy-1,4-benzoquinol during ubiquinone biosynthesis. This Paraburkholderia phytofirmans (strain DSM 17436 / LMG 22146 / PsJN) (Burkholderia phytofirmans) protein is 3-demethoxyubiquinol 3-hydroxylase.